The following is a 409-amino-acid chain: SPI-1 type 3 secretion system translocon protein SctB (409 aa).

The helical transmembrane segment at 119–140 (ISGMSSSAVALLAAANTLMLTL) threads the bilayer. A compositionally biased stretch (polar residues) spans 350–368 (ERSEQQISQVNNRVASTAS). Residues 350-378 (ERSEQQISQVNNRVASTASDEARESSRKS) form a disordered region.

The protein belongs to the SctB/SipC family. As to quaternary structure, the core secretion machinery of the T3SS is composed of approximately 20 different proteins, including cytoplasmic components, a base, an export apparatus and a needle. This subunit is involved in the formation of a pore, called the translocon, in host membrane.

It is found in the secreted. The protein localises to the host membrane. Component of the type III secretion system 1 (SPI-1 T3SS), also called injectisome, which is used to inject bacterial effector proteins into eukaryotic host cells. SipB/SctE1 and SipC/SctB1 are inserted into the host membrane where they form a pore and allow the translocation of effector proteins into the cytosol of target cells. This chain is SPI-1 type 3 secretion system translocon protein SctB, found in Salmonella typhi.